Reading from the N-terminus, the 186-residue chain is Acireductone dioxygenase (186 aa).

Residues 1–21 (MSRLSIFPDGSTSMDQSSPTP) form a disordered region. Positions 10 to 20 (GSTSMDQSSPT) are enriched in polar residues. Fe(2+)-binding residues include His103, His105, Glu109, and His147. The Ni(2+) site is built by His103, His105, Glu109, and His147.

It belongs to the acireductone dioxygenase (ARD) family. In terms of assembly, monomer. The cofactor is Fe(2+). Ni(2+) is required as a cofactor.

The enzyme catalyses 1,2-dihydroxy-5-(methylsulfanyl)pent-1-en-3-one + O2 = 3-(methylsulfanyl)propanoate + CO + formate + 2 H(+). It catalyses the reaction 1,2-dihydroxy-5-(methylsulfanyl)pent-1-en-3-one + O2 = 4-methylsulfanyl-2-oxobutanoate + formate + 2 H(+). It participates in amino-acid biosynthesis; L-methionine biosynthesis via salvage pathway; L-methionine from S-methyl-5-thio-alpha-D-ribose 1-phosphate: step 5/6. Functionally, catalyzes 2 different reactions between oxygen and the acireductone 1,2-dihydroxy-3-keto-5-methylthiopentene (DHK-MTPene) depending upon the metal bound in the active site. Fe-containing acireductone dioxygenase (Fe-ARD) produces formate and 2-keto-4-methylthiobutyrate (KMTB), the alpha-ketoacid precursor of methionine in the methionine recycle pathway. Ni-containing acireductone dioxygenase (Ni-ARD) produces methylthiopropionate, carbon monoxide and formate, and does not lie on the methionine recycle pathway. This Synechococcus sp. (strain CC9902) protein is Acireductone dioxygenase.